The chain runs to 227 residues: MSIRFVAADAHWRVAPLPGLSAAQKDWLTRGGSLTAHLRALGAVAVRVTREGVALPWPDEHAALGLAPRAPVWVREVVLAVEGVPFVAAHSVAPLAASAGVWQAMRRLRTRPLAELLYSDSSVARSSLVSRRLTARHPLYRLAACAIESLPPHALVARRSVFERHGAPLMVTECMLPALWAHLATVSGAGGSGDWSAHPRVREHGRPLEHTASRAHPATRASDEQRR.

Substrate-binding residues include Arg75, Leu113, and Glu173. Positions 192–227 (SGDWSAHPRVREHGRPLEHTASRAHPATRASDEQRR) are disordered. The span at 200–212 (RVREHGRPLEHTA) shows a compositional bias: basic and acidic residues.

This sequence belongs to the UbiC family.

Its subcellular location is the cytoplasm. The catalysed reaction is chorismate = 4-hydroxybenzoate + pyruvate. It participates in cofactor biosynthesis; ubiquinone biosynthesis. Functionally, removes the pyruvyl group from chorismate, with concomitant aromatization of the ring, to provide 4-hydroxybenzoate (4HB) for the ubiquinone pathway. The sequence is that of Probable chorismate pyruvate-lyase from Paraburkholderia xenovorans (strain LB400).